The sequence spans 192 residues: MTHYILLIIGTALINNFVLVKFLGLCPFMGVSKKIETAVGMGLATMFVLTVASLCAYLVDHYILIPLNATFLRTLVFILVIAVVVQFTEMAINKTSPTLYRLLGIFLPLITTNCAVLGVALLNVNLAHNLTESVVYGFGASLGFSLVLVLFAALRERLVAADIPATFRGSSIALITAGLMSLAFMGFTGLVK.

The next 6 membrane-spanning stretches (helical) occupy residues 5–25 (ILLI…FLGL), 39–59 (VGMG…AYLV), 63–83 (ILIP…VIAV), 102–122 (LLGI…VALL), 134–154 (VVYG…FAAL), and 171–191 (SIAL…TGLV).

Belongs to the NqrDE/RnfAE family. In terms of assembly, the complex is composed of six subunits: RnfA, RnfB, RnfC, RnfD, RnfE and RnfG.

Its subcellular location is the cell inner membrane. In terms of biological role, part of a membrane-bound complex that couples electron transfer with translocation of ions across the membrane. In Haemophilus influenzae (strain ATCC 51907 / DSM 11121 / KW20 / Rd), this protein is Ion-translocating oxidoreductase complex subunit A.